Here is a 326-residue protein sequence, read N- to C-terminus: Lipid droplet-associated hydrolase (326 aa).

The active-site Nucleophile is the Ser140. Catalysis depends on charge relay system residues Asp272 and His301.

Belongs to the AB hydrolase superfamily. LDAH family. Expressed in liver, adrenal gland, prostate, spleen, kidney, brown and white adipose tissue, testis and to a lesser extent in brain (at protein level). Expressed in peritoneal macrophages and bone marrow-derived macrophages (at protein level). Highly expressed in macrophage and foam cell-rich areas in atherosclerotic lesions (at protein level). mRNA, but no protein, expressed in heart and muscle.

It is found in the lipid droplet. It localises to the endoplasmic reticulum. The enzyme catalyses a cholesterol ester + H2O = cholesterol + a fatty acid + H(+). Probable serine lipid hydrolase associated with lipid droplets. Has low cholesterol esterase activity. Appears to lack triglyceride lipase activity. Involved in cholesterol and triglyceride homeostasis; stimulates cellular triglyceride accumulation and cellular cholesterol release. Acts antagonistically with PNPLA2/ATGL in regulation of cellular lipid stores. May regulate triglyceride accumulation indirectly through stimulation of PNPLA2/ATGL ubiquitination and proteasomal degradation. Promotes microtubule-dependent lipid droplet fusion. Highly expressed in macrophage-rich areas in atherosclerotic lesions, suggesting that it could promote cholesterol ester turnover in macrophages. Its function is as follows. Stimulates cellular triglyceride accumulation and lipid droplet fusion. In terms of biological role, associates with lipid droplets but does not stimulate cellular triglyceride accumulation, lipid droplet fusion or ATGL proteasomal degradation. The polypeptide is Lipid droplet-associated hydrolase (Mus musculus (Mouse)).